Reading from the N-terminus, the 467-residue chain is DNA polymerase IV (467 aa).

In terms of domain architecture, UmuC spans 5–187 (VLHIDMDAFF…LPVGALWGVG (183 aa)). Residues Asp9 and Asp104 each contribute to the Mg(2+) site. Glu105 is an active-site residue. Disordered stretches follow at residues 364 to 386 (PDTDYEVGVQSSSSSESTQVEAP) and 428 to 449 (TKGRTKSFSMDDPDLTPADPLD).

This sequence belongs to the DNA polymerase type-Y family. As to quaternary structure, monomer. Requires Mg(2+) as cofactor.

It localises to the cytoplasm. It carries out the reaction DNA(n) + a 2'-deoxyribonucleoside 5'-triphosphate = DNA(n+1) + diphosphate. Its function is as follows. Poorly processive, error-prone DNA polymerase involved in untargeted mutagenesis. Copies undamaged DNA at stalled replication forks, which arise in vivo from mismatched or misaligned primer ends. These misaligned primers can be extended by PolIV. Exhibits no 3'-5' exonuclease (proofreading) activity. May be involved in translesional synthesis, in conjunction with the beta clamp from PolIII. The polypeptide is DNA polymerase IV (Corynebacterium glutamicum (strain R)).